The following is a 275-amino-acid chain: COP9 signalosome complex subunit 7a (275 aa).

Ser-2 is subject to N-acetylserine. The PCI domain occupies 2 to 159 (SAEVKVTGQN…QRLEVDYSIG (158 aa)). Residues 185–233 (LSGIEEQVSRANQHKEQQLGLKQQIESEVANLKKTIKVTTAAAAAATSQ) adopt a coiled-coil conformation. Positions 227 to 275 (AAAATSQDPEQHLTELREPAPGTNQRQPSKKASKGKGLRGSAKIWSKSN) are disordered. Basic and acidic residues predominate over residues 235-244 (PEQHLTELRE). Positions 254–263 (PSKKASKGKG) are enriched in basic residues.

Belongs to the CSN7/EIF3M family. CSN7 subfamily. As to quaternary structure, component of the CSN complex, composed of COPS1/GPS1, COPS2, COPS3, COPS4, COPS5, COPS6, COPS7 (COPS7A or COPS7B), COPS8 and COPS9. In the complex, it probably interacts directly with COPS1, COPS2, COPS4, COPS5, COPS6 and COPS8. Interacts with PMF1. Interacts with the translation initiation factor EIF3S6. Interacts with CK2 and PKD. Interacts directly with ID3. Post-translationally, phosphorylated by CK2 and PKD kinases.

It is found in the cytoplasm. The protein resides in the nucleus. Functionally, component of the COP9 signalosome complex (CSN), a complex involved in various cellular and developmental processes. The CSN complex is an essential regulator of the ubiquitin (Ubl) conjugation pathway by mediating the deneddylation of the cullin subunits of SCF-type E3 ligase complexes, leading to decrease the Ubl ligase activity of SCF-type complexes such as SCF, CSA or DDB2. The complex is also involved in phosphorylation of p53/TP53, JUN, I-kappa-B-alpha/NFKBIA, ITPK1 and IRF8/ICSBP, possibly via its association with CK2 and PKD kinases. CSN-dependent phosphorylation of TP53 and JUN promotes and protects degradation by the Ubl system, respectively. This chain is COP9 signalosome complex subunit 7a (COPS7A), found in Pongo abelii (Sumatran orangutan).